We begin with the raw amino-acid sequence, 235 residues long: Large ribosomal subunit protein uL1 (235 aa).

The protein belongs to the universal ribosomal protein uL1 family. In terms of assembly, part of the 50S ribosomal subunit.

Functionally, binds directly to 23S rRNA. The L1 stalk is quite mobile in the ribosome, and is involved in E site tRNA release. In terms of biological role, protein L1 is also a translational repressor protein, it controls the translation of the L11 operon by binding to its mRNA. This Blochmanniella floridana protein is Large ribosomal subunit protein uL1.